Consider the following 234-residue polypeptide: Phosphoribosylaminoimidazole-succinocarboxamide synthase (234 aa).

The protein belongs to the SAICAR synthetase family.

The catalysed reaction is 5-amino-1-(5-phospho-D-ribosyl)imidazole-4-carboxylate + L-aspartate + ATP = (2S)-2-[5-amino-1-(5-phospho-beta-D-ribosyl)imidazole-4-carboxamido]succinate + ADP + phosphate + 2 H(+). It participates in purine metabolism; IMP biosynthesis via de novo pathway; 5-amino-1-(5-phospho-D-ribosyl)imidazole-4-carboxamide from 5-amino-1-(5-phospho-D-ribosyl)imidazole-4-carboxylate: step 1/2. The polypeptide is Phosphoribosylaminoimidazole-succinocarboxamide synthase (Pyrococcus furiosus (strain ATCC 43587 / DSM 3638 / JCM 8422 / Vc1)).